The following is a 917-amino-acid chain: Low-density lipoprotein receptor-related protein 8 (917 aa).

An N-terminal signal peptide occupies residues 1–24 (MCRPALARLLLLQLLLLKLYLGKG). The Extracellular segment spans residues 25 to 838 (AMKECDKDQF…GQGFDSTVTA (814 aa)). LDL-receptor class A domains follow at residues 28–64 (ECDK…ADCP), 67–105 (TCAE…AACT), 108–146 (VCPA…AGCA), 148–184 (ACSP…KKCS), and 187–225 (TCSP…ERCG). 29 disulfides stabilise this stretch: Cys29-Cys41, Cys36-Cys54, Cys48-Cys63, Cys68-Cys80, Cys75-Cys93, Cys87-Cys104, Cys109-Cys123, Cys116-Cys136, Cys130-Cys145, Cys149-Cys161, Cys156-Cys174, Cys168-Cys183, Cys188-Cys200, Cys195-Cys213, Cys207-Cys224, Cys241-Cys259, Cys253-Cys268, Cys273-Cys285, Cys280-Cys298, Cys292-Cys307, Cys313-Cys326, Cys321-Cys339, Cys333-Cys350, Cys355-Cys366, Cys362-Cys375, Cys377-Cys389, Cys395-Cys405, Cys401-Cys414, and Cys416-Cys429. Ca(2+) is bound by residues Trp46, Asp49, Asp51, Asp53, Asp59, and Glu60. Asn158 carries an N-linked (GlcNAc...) asparagine glycan. Residue Asn196 is glycosylated (N-linked (GlcNAc...) asparagine). 2 LDL-receptor class A domains span residues 272–308 (TCRP…AGCV) and 312–351 (ACES…KECG). One can recognise an EGF-like 1 domain in the interval 346-390 (PLKECGINECSLNNGGCSHICKDLKIGYECECPPGYKLLDKKTCG). The 40-residue stretch at 391-430 (DIDECENPDACSQICINYKGDYKCECYEGYEMDTLSKNCK) folds into the EGF-like 2; calcium-binding domain. LDL-receptor class B repeat units lie at residues 476 to 522 (NRIY…DWVH), 523 to 565 (KNIY…DPTR), 566 to 609 (RFMY…DLLN), 610 to 652 (QRLY…AVFE), and 653 to 695 (DRVF…FHEL). A glycan (N-linked (GlcNAc...) asparagine) is linked at Asn532. An N-linked (GlcNAc...) asparagine glycan is attached at Asn628. Positions 754 to 813 (TTPATVEVPTTTTSHPAATSTVTVTGSANTTTAVIPRAVSEATTAIPSSHSTTSLLIDSE) are clustered O-linked oligosaccharides. 2 N-linked (GlcNAc...) asparagine glycosylation sites follow: Asn782 and Asn820. The chain crosses the membrane as a helical span at residues 839–861 (AVIGIVIPVVVIGLLCMGGYLIW). Over 862-917 (RNWKRKNTKSMNFDNPVYRKTTEEEDEDEIHIGRTAQIGHVYPARVALSLEDDGLP) the chain is Cytoplasmic.

This sequence belongs to the LDLR family. In terms of assembly, homooligomer. As to expression, mainly in brain.

Its subcellular location is the cell membrane. In terms of biological role, cell surface receptor for Reelin (RELN) and apolipoprotein E (apoE)-containing ligands. Also binds alpha2-macroglobulin. LRP8 participates in transmitting the extracellular Reelin signal to intracellular signaling processes, by binding to DAB1 on its cytoplasmic tail. Reelin acts via both the VLDL receptor (VLDLR) and LRP8 to regulate DAB1 tyrosine phosphorylation and microtubule function in neurons. LRP8 has higher affinity for Reelin than VLDLR. LRP8 is thus a key component of the Reelin pathway which governs neuronal layering of the forebrain during embryonic brain development. Not required for endocytic uptake of SEPP1 in the kidney which is mediated by LRP2. This Gallus gallus (Chicken) protein is Low-density lipoprotein receptor-related protein 8 (LRP8).